Reading from the N-terminus, the 210-residue chain is Ribosomal RNA small subunit methyltransferase G (210 aa).

Residues glycine 80, leucine 85, 131–132 (VE), and arginine 146 contribute to the S-adenosyl-L-methionine site.

It belongs to the methyltransferase superfamily. RNA methyltransferase RsmG family.

The protein localises to the cytoplasm. It carries out the reaction guanosine(527) in 16S rRNA + S-adenosyl-L-methionine = N(7)-methylguanosine(527) in 16S rRNA + S-adenosyl-L-homocysteine. Functionally, specifically methylates the N7 position of guanine in position 527 of 16S rRNA. The chain is Ribosomal RNA small subunit methyltransferase G from Pasteurella multocida (strain Pm70).